Consider the following 331-residue polypeptide: XylDLEGF operon transcriptional activator 3 (331 aa).

Residues 214–315 enclose the HTH araC/xylS-type domain; sequence ERVVQFIEDN…GELPSDTLRR (102 aa). 2 DNA-binding regions (H-T-H motif) span residues 231–252 and 282–305; these read ERLAELALMSPRSLYTLFEKHA and VTEMALDYGFFHTGRFAENYRSTF.

Its subcellular location is the cytoplasm. Regulatory protein of the TOL plasmid xyl operons. XylS activates the xylXYZLTEGFJQKIH operon required for the degradation of toluene, m-xylene and p-xylene. This chain is XylDLEGF operon transcriptional activator 3 (xylS3), found in Pseudomonas putida (Arthrobacter siderocapsulatus).